A 429-amino-acid chain; its full sequence is MFS-type efflux pump MSMEG_3705 (429 aa).

12 helical membrane-spanning segments follow: residues 21–41, 59–79, 86–106, 115–137, 150–170, 181–201, 228–248, 264–284, 299–319, 327–347, 361–381, and 397–417; these read AWAA…DRFL, AIGV…GIAV, GAFG…TMLG, LALT…HAYV, LAVI…GGGL, FVIM…VVGV, FLIV…LTTF, VGVE…LIVG, LWIV…AFVV, LFLA…IAAI, AMFL…VGML, and ALLL…WLAS.

The protein belongs to the major facilitator superfamily.

It localises to the cell inner membrane. Probably plays a role in bacterial growth and resistance to antibiotics. The protein is MFS-type efflux pump MSMEG_3705 of Mycolicibacterium smegmatis (strain ATCC 700084 / mc(2)155) (Mycobacterium smegmatis).